A 543-amino-acid polypeptide reads, in one-letter code: MAEFNIDELLKNVLEDPSTEISEETLKQLYQKTNPYKQFKNDSRVAFCSFTNLREQYIRRLIMTSFIGYVFKALQEWMPSYSKPTHTTKTLLSELITLVDTLKQETNDVPSESVVNTLLSIADNCKTQTQKSTEAKTTIDSFLREHFVFDPNLHAQSAYTCASTCASTCASTCASTCADTNVDTCTDTCASTCADTNVDTCASTCADTCASTEYTDLMDPERIPLHIMQKTLNVPNELQADIDAITQTRQGYRAAAHILQNIELHQSIKHMLENPKAFKPILFNTKITRYLSQHIPPQDTFYKWNYYIEDNYEELRAATESIYPEKPDLEFAFIIYDVVDSSSNQQKIDEFYYKYKDQIFSEVSSIQLGNWTLLGSFKANRERYNYFNQNNEIIKRILDRHEEDLKIGKEILRNTIYHKKAKNIQETGPDAPGLSIYNSTFHTDSGIKGLLSFKELKNLEKASGNIKKAREYDFIDDCEEKIKQLLSKENLTPDEKSQLEKTKKQLENALEMLNVPDDTIRVDMWVNNNNKLEKEILYTKAEL.

Repeat copies occupy residues 161-164 (CAST), 165-168 (CAST), 169-172 (CAST), 173-176 (CAST), 177-180 (CADT), 181-184 (NVDT), 185-188 (CTDT), 189-192 (CAST), 193-196 (CADT), 197-200 (NVDT), 201-204 (CAST), 205-208 (CADT), and 209-212 (CAST). The segment at 161-212 (CASTCASTCASTCASTCADTNVDTCTDTCASTCADTNVDTCASTCADTCAST) is 13 X 4 AA tandem repeats of [CN]-[ATV]-[DS]-T.

This sequence belongs to the asfivirus B602L family.

The protein localises to the host cytoplasm. Functionally, plays an essential role in the assembly of the icosahedral capsid of the virus. Allows the assembly of 3 molecules of hexon protein p72 and formation of a thermostable trimer. This chain is Protein B602L, found in African swine fever virus (isolate Pig/Kenya/KEN-50/1950) (ASFV).